Here is a 712-residue protein sequence, read N- to C-terminus: Polyribonucleotide nucleotidyltransferase (712 aa).

Aspartate 487 and aspartate 493 together coordinate Mg(2+). The 60-residue stretch at proline 554–isoleucine 613 folds into the KH domain. Residues glycine 623–lysine 691 enclose the S1 motif domain.

This sequence belongs to the polyribonucleotide nucleotidyltransferase family. Mg(2+) serves as cofactor.

The protein resides in the cytoplasm. The enzyme catalyses RNA(n+1) + phosphate = RNA(n) + a ribonucleoside 5'-diphosphate. Functionally, involved in mRNA degradation. Catalyzes the phosphorolysis of single-stranded polyribonucleotides processively in the 3'- to 5'-direction. This Bacillus cereus (strain ATCC 10987 / NRS 248) protein is Polyribonucleotide nucleotidyltransferase.